Consider the following 1405-residue polypeptide: MKDLVKVLKSQAQSEEFDAIKITLASPDMIRSWSYGEVKKPETINYRTFKPERDGLFCAKIFGPVKDYECLCGKYKRMKHRGIICEKCGVEVTKAAVRRERMGHIELAAPVAHIWFLKSLPSRIGMFLDMTLRDIERVLYFESFMVIDPGMTTLERGQLLNDEQYFEALEEFGDDFDARMGAEAVQALLNDVDLDEEIERLREEIPQTNSETKIKKLSKRLKLLEAFQKSGNDPAWMIMEVLPVLPPDLRPLVPLDGGRFATSDLNDLYRRVINRNNRLKRLLDLNAPDIIVRNEKRMLQESVDALLDNGRRGRAITGSNKRPLKSLADMIKGKQGRFRQNLLGKRVDYSGRSVITVGPTLRLHQCGLPKKMALELFKPFIYSKLQAGGQASTIKAAKKMVERELPEVWDILADVIREHPVLLNRAPTLHRLGIQAFEPLLIEGKAIQLHPLVCAAYNADFDGDQMAVHVPLTLEAQLESRTLMMATNNVLSPANGEPIIVPSQDVVLGLYYMTREKIGAPGEGMVFSNLDEVERAFGTQSVSLHARVKVRLTEYDRDEDGGEWTSSTKIHDTTVGRALLYRILPKGMPFELVDQPMKKKAISGLINAVYRRSGLKDTVIFADQLMYTGFRLATWSGASIGVNDFVIPDSKKEIVDGAEEEVKEIENQFSSGLVTAGEKYNKVIDIWSKANDKVAKAMMAGISKETAIDREGNEVEQDSFNSVFIMADSGARGSAAQIRQLAGMRGLMAKPDGSIIETPITANFREGLNVLQYFISTHGARKGLADTALKTANSGYLTRRLVDVSQDLVITEEDCGTEDGLTLHPVIEGGDVIVSLAQRVLGRVVAQDVVDPATDDVLIARGTLLDEAWCARLDTMGVDEIVVRSAITCETAHGVCSACYGRDLARGHQVNVGEAVGVIAAQSIGEPGTQLTMRTFHIGGAASRASAVDSVQVKHGGTVRLHNIKHVERSDGKLVVVSRSSALAVADEHGREREYYKLPYGAELSVRDGDMVEAGTPVAKWDPHTHPVVAEVEGKVQFSDMEEGLTIHRSVDEMTGLSNIEVIESASRPASGRDKRPMIMLLDENGGHVTLPGSNTPVQYMLPGKAIISVENGGQVGVGEVIARIPVEASGNKDITGGLPRVADLFEARKPKEPAILAEVTGTISFGKETKGKRRLTITPEEGDPLEMLIPKWRQIGVFEGETVEKGEVISDGPSNPHDILRLLGVAELAKYITAEIQDVYRLQGVVIDDKHIEVIVRQMLRKVEITDSGDSSFITGDQVEFVRVLEENQRLAQEDKFPAKYDRLLLGITKASLATESFISAASFQETTRVLTEAAVTGKRDYLRGLKENVVVGRLVPAGTGLAHHAERRRRREDPESTANPSAFDVEQELGAQLTALDAEDDDL.

Zn(2+) is bound by residues C70, C72, C85, and C88. Mg(2+) contacts are provided by D460, D462, and D464. Positions 815, 889, 896, and 899 each coordinate Zn(2+). Residues 1363 to 1388 form a disordered region; that stretch reads LAHHAERRRRREDPESTANPSAFDVE.

This sequence belongs to the RNA polymerase beta' chain family. In terms of assembly, the RNAP catalytic core consists of 2 alpha, 1 beta, 1 beta' and 1 omega subunit. When a sigma factor is associated with the core the holoenzyme is formed, which can initiate transcription. Mg(2+) is required as a cofactor. It depends on Zn(2+) as a cofactor.

It carries out the reaction RNA(n) + a ribonucleoside 5'-triphosphate = RNA(n+1) + diphosphate. In terms of biological role, DNA-dependent RNA polymerase catalyzes the transcription of DNA into RNA using the four ribonucleoside triphosphates as substrates. This chain is DNA-directed RNA polymerase subunit beta', found in Chromohalobacter salexigens (strain ATCC BAA-138 / DSM 3043 / CIP 106854 / NCIMB 13768 / 1H11).